The following is a 176-amino-acid chain: Ribosome maturation factor RimM (176 aa).

One can recognise a PRC barrel domain in the interval 97-176 (EDEFYWRDLI…QITVDWDPDF (80 aa)).

It belongs to the RimM family. Binds ribosomal protein uS19.

The protein localises to the cytoplasm. An accessory protein needed during the final step in the assembly of 30S ribosomal subunit, possibly for assembly of the head region. Essential for efficient processing of 16S rRNA. May be needed both before and after RbfA during the maturation of 16S rRNA. It has affinity for free ribosomal 30S subunits but not for 70S ribosomes. The protein is Ribosome maturation factor RimM of Shewanella sediminis (strain HAW-EB3).